A 214-amino-acid polypeptide reads, in one-letter code: Adenylate kinase (214 aa).

10–15 serves as a coordination point for ATP; the sequence is GAGKGT. The NMP stretch occupies residues 30 to 59; the sequence is STGDMLRAAIKAGTELGNAAKRVMDEGKLV. AMP is bound by residues Thr-31, Arg-36, 57–59, 85–88, and Gln-92; these read KLV and GFPR. The segment at 122-159 is LID; it reads GRRVHPASGRVYHLQYNPPQNDGKDDETGEDLVIRADD. Residues Arg-123 and 132–133 contribute to the ATP site; that span reads VY. Residues Arg-156 and Arg-167 each contribute to the AMP site. Lys-200 is a binding site for ATP.

This sequence belongs to the adenylate kinase family. Monomer.

It is found in the cytoplasm. The catalysed reaction is AMP + ATP = 2 ADP. Its pathway is purine metabolism; AMP biosynthesis via salvage pathway; AMP from ADP: step 1/1. Catalyzes the reversible transfer of the terminal phosphate group between ATP and AMP. Plays an important role in cellular energy homeostasis and in adenine nucleotide metabolism. In Pseudoalteromonas atlantica (strain T6c / ATCC BAA-1087), this protein is Adenylate kinase.